The sequence spans 465 residues: 3-isopropylmalate dehydratase large subunit (465 aa).

Residues cysteine 346, cysteine 406, and cysteine 409 each coordinate [4Fe-4S] cluster.

Belongs to the aconitase/IPM isomerase family. LeuC type 1 subfamily. In terms of assembly, heterodimer of LeuC and LeuD. The cofactor is [4Fe-4S] cluster.

The enzyme catalyses (2R,3S)-3-isopropylmalate = (2S)-2-isopropylmalate. Its pathway is amino-acid biosynthesis; L-leucine biosynthesis; L-leucine from 3-methyl-2-oxobutanoate: step 2/4. Catalyzes the isomerization between 2-isopropylmalate and 3-isopropylmalate, via the formation of 2-isopropylmaleate. The polypeptide is 3-isopropylmalate dehydratase large subunit (Psychromonas ingrahamii (strain DSM 17664 / CCUG 51855 / 37)).